We begin with the raw amino-acid sequence, 256 residues long: Protein FixA (256 aa).

Belongs to the ETF beta-subunit/FixA family. In terms of assembly, heterodimer of FixA and FixB.

It participates in amine and polyamine metabolism; carnitine metabolism. Its function is as follows. Required for anaerobic carnitine reduction. May bring reductant to CaiA. This Escherichia coli O6:H1 (strain CFT073 / ATCC 700928 / UPEC) protein is Protein FixA.